The sequence spans 470 residues: Siroheme synthase (470 aa).

Positions 1–213 (MSDATDPGWF…GEHAAARQVL (213 aa)) are precorrin-2 dehydrogenase /sirohydrochlorin ferrochelatase. Residues 28 to 29 (GI) and 49 to 50 (PR) each bind NAD(+). Positions 224 to 470 (GEVWLVGAGP…VVTPPPLSGT (247 aa)) are uroporphyrinogen-III C-methyltransferase. Residue Pro-233 participates in S-adenosyl-L-methionine binding. Asp-256 functions as the Proton acceptor in the catalytic mechanism. Lys-278 serves as the catalytic Proton donor. S-adenosyl-L-methionine is bound by residues 309–311 (GGD), Ile-314, 339–340 (TA), Met-392, and Gly-421.

This sequence in the N-terminal section; belongs to the precorrin-2 dehydrogenase / sirohydrochlorin ferrochelatase family. It in the C-terminal section; belongs to the precorrin methyltransferase family.

The enzyme catalyses uroporphyrinogen III + 2 S-adenosyl-L-methionine = precorrin-2 + 2 S-adenosyl-L-homocysteine + H(+). It carries out the reaction precorrin-2 + NAD(+) = sirohydrochlorin + NADH + 2 H(+). It catalyses the reaction siroheme + 2 H(+) = sirohydrochlorin + Fe(2+). Its pathway is cofactor biosynthesis; adenosylcobalamin biosynthesis; precorrin-2 from uroporphyrinogen III: step 1/1. It functions in the pathway cofactor biosynthesis; adenosylcobalamin biosynthesis; sirohydrochlorin from precorrin-2: step 1/1. The protein operates within porphyrin-containing compound metabolism; siroheme biosynthesis; precorrin-2 from uroporphyrinogen III: step 1/1. It participates in porphyrin-containing compound metabolism; siroheme biosynthesis; siroheme from sirohydrochlorin: step 1/1. Its pathway is porphyrin-containing compound metabolism; siroheme biosynthesis; sirohydrochlorin from precorrin-2: step 1/1. Multifunctional enzyme that catalyzes the SAM-dependent methylations of uroporphyrinogen III at position C-2 and C-7 to form precorrin-2 via precorrin-1. Then it catalyzes the NAD-dependent ring dehydrogenation of precorrin-2 to yield sirohydrochlorin. Finally, it catalyzes the ferrochelation of sirohydrochlorin to yield siroheme. The polypeptide is Siroheme synthase (Gluconacetobacter diazotrophicus (strain ATCC 49037 / DSM 5601 / CCUG 37298 / CIP 103539 / LMG 7603 / PAl5)).